Here is a 225-residue protein sequence, read N- to C-terminus: Probable iron export ATP-binding protein FetA (225 aa).

The 218-residue stretch at 8 to 225 (LQLQNVGYLA…EMQEARYELA (218 aa)) folds into the ABC transporter domain. 40-47 (GPSGCGKS) provides a ligand contact to ATP.

The protein belongs to the ABC transporter superfamily. As to quaternary structure, the complex is composed of two ATP-binding proteins (FetA) and two transmembrane proteins (FetB).

The protein localises to the cell inner membrane. In terms of biological role, part of the ABC transporter complex FetAB, which is probably involved in iron export and enhances resistance to H(2)O(2)-mediated oxidative stress. Probably responsible for energy coupling to the transport system. In Escherichia coli (strain K12), this protein is Probable iron export ATP-binding protein FetA (fetA).